Here is a 91-residue protein sequence, read N- to C-terminus: Acylphosphatase (91 aa).

Positions 5–91 (CLHAYVGGRV…QGIAGFVVRR (87 aa)) constitute an Acylphosphatase-like domain. Residues Arg20 and Asn38 contribute to the active site.

Belongs to the acylphosphatase family.

The catalysed reaction is an acyl phosphate + H2O = a carboxylate + phosphate + H(+). The protein is Acylphosphatase (acyP) of Pseudomonas aeruginosa (strain ATCC 15692 / DSM 22644 / CIP 104116 / JCM 14847 / LMG 12228 / 1C / PRS 101 / PAO1).